Here is a 155-residue protein sequence, read N- to C-terminus: MKSADQLMSDIQLSLQALFQKIQPEMLESMEKQGVTPAQLFVLASLKKHGSLKVSEIAERMEVKPSAVTLMADRLEQKNLIARTHNTKDRRVIDLSLTDEGDIKFEEVLAGRKAIMARYLSFLTEEEMLQAAHITAKLAQAAETDEKQNMKRGNG.

In terms of domain architecture, HTH marR-type spans 4 to 140; it reads ADQLMSDIQL…AAHITAKLAQ (137 aa). A DNA-binding region (H-T-H motif) is located at residues 54–77; the sequence is VSEIAERMEVKPSAVTLMADRLEQ.

Homodimer.

Its subcellular location is the cytoplasm. With respect to regulation, the binding of MdtR to the mdtRP promoter region is severely inhibited by adding excess concentrations of fusidic acid or novobiocin but not by actinomycin or streptomycin. In terms of biological role, repressor of the multidrug resistance operon mdtRP. Acts by binding directly to the mdtRP promoter region, leading to the repression of its expression. The sequence is that of HTH-type transcriptional repressor MdtR from Bacillus subtilis (strain 168).